We begin with the raw amino-acid sequence, 304 residues long: Aspartate carbamoyltransferase catalytic subunit (304 aa).

Carbamoyl phosphate is bound by residues Arg54 and Thr55. Residue Lys83 coordinates L-aspartate. Residues Arg104, His132, and Gln135 each coordinate carbamoyl phosphate. L-aspartate contacts are provided by Arg165 and Arg226. Positions 265 and 266 each coordinate carbamoyl phosphate.

The protein belongs to the aspartate/ornithine carbamoyltransferase superfamily. ATCase family. In terms of assembly, heterooligomer of catalytic and regulatory chains.

It catalyses the reaction carbamoyl phosphate + L-aspartate = N-carbamoyl-L-aspartate + phosphate + H(+). It functions in the pathway pyrimidine metabolism; UMP biosynthesis via de novo pathway; (S)-dihydroorotate from bicarbonate: step 2/3. In terms of biological role, catalyzes the condensation of carbamoyl phosphate and aspartate to form carbamoyl aspartate and inorganic phosphate, the committed step in the de novo pyrimidine nucleotide biosynthesis pathway. In Pyrobaculum neutrophilum (strain DSM 2338 / JCM 9278 / NBRC 100436 / V24Sta) (Thermoproteus neutrophilus), this protein is Aspartate carbamoyltransferase catalytic subunit.